We begin with the raw amino-acid sequence, 888 residues long: 3-hydroxy-3-methylglutaryl-coenzyme A reductase (888 aa).

The Cytoplasmic segment spans residues 1–9; sequence MLSRLFRMH. The helical transmembrane segment at 10-39 threads the bilayer; that stretch reads GLFVASHPWEVIVGTVTLTICMMSMNMFTG. Over 40–56 the chain is Lumenal; that stretch reads NNKICGWNYECPKLEED. The helical transmembrane segment at 57 to 78 threads the bilayer; the sequence is VLSSDIIILTITRCIAILYIYF. The SSD domain maps to 61 to 218; it reads DIIILTITRC…MTFFPACVSL (158 aa). Positions 75-78 match the INSIG-binding motif motif; it reads YIYF. Residues 79 to 89 lie on the Cytoplasmic side of the membrane; that stretch reads QFQNLRQLGSK. A Glycyl lysine isopeptide (Lys-Gly) (interchain with G-Cter in ubiquitin) cross-link involves residue Lys-89. A helical membrane pass occupies residues 90–114; it reads YILGIAGLFTIFSSFVFSTVVIHFL. Residues 115-123 are Lumenal-facing; that stretch reads DKELTGLNE. The helical transmembrane segment at 124-149 threads the bilayer; sequence ALPFFLLLVDLSRASALAKFALSSNS. Residues 150–159 lie on the Cytoplasmic side of the membrane; the sequence is QDEVRENIAR. The chain crosses the membrane as a helical span at residues 160-187; sequence GMAILGPTFTLDALVECLVIGVGTMSGV. Residues 188-191 lie on the Lumenal side of the membrane; the sequence is RQLE. The helical transmembrane segment at 192 to 220 threads the bilayer; sequence IMCCFGCMSVLANYFVFMTFFPACVSLVL. At 221–248 the chain is on the cytoplasmic side; the sequence is ELSRESREGRPIWQLSHFARVLEEEENK. Lys-248 is covalently cross-linked (Glycyl lysine isopeptide (Lys-Gly) (interchain with G-Cter in ubiquitin)). A helical transmembrane segment spans residues 249-275; it reads PNPVTQRVKMIMSLGLVLVHAHSRWIA. The Lumenal segment spans residues 276–314; it reads DPSPQNSTADNSKVSLGLDENVSKRIEPSVSLWQFYLSK. Asn-281 and Asn-296 each carry an N-linked (GlcNAc...) asparagine glycan. Residues 315–339 form a helical membrane-spanning segment; the sequence is MISMDIEQVITLSLALLLAVKYIFF. Over 340–888 the chain is Cytoplasmic; the sequence is EQAETESTLS…LQGTCTKKAA (549 aa). Residues Glu-559, Lys-691, and Asp-767 each act as charge relay system in the active site. The Proton donor role is filled by His-866. Position 872 is a phosphoserine; by AMPK (Ser-872).

Belongs to the HMG-CoA reductase family. In terms of assembly, homotetramer. Homodimer. Interacts (via its SSD) with INSIG1; the interaction, accelerated by sterols, leads to the recruitment of HMGCR to AMFR/gp78 for its ubiquitination by the sterol-mediated ERAD pathway. Interacts with UBIAD1. In terms of processing, undergoes sterol-mediated ubiquitination and ER-associated degradation (ERAD). Accumulation of sterols in the endoplasmic reticulum (ER) membrane, triggers binding of the reductase to the ER membrane protein INSIG1 or INSIG2. The INSIG1 binding leads to the recruitment of the ubiquitin ligase, AMFR/gp78, RNF139 or RNF145, initiating ubiquitination of the reductase. The ubiquitinated reductase is then extracted from the ER membrane and delivered to cytosolic 26S proteosomes by a mechanism probably mediated by the ATPase Valosin-containing protein VCP/p97. The INSIG2-binding leads to the recruitment of the ubiquitin ligase RNF139, initiating ubiquitination of the reductase. Lys-248 is the main site of ubiquitination. Ubiquitination is enhanced by the presence of a geranylgeranylated protein. N-glycosylated. Deglycosylated by NGLY1 on release from the endoplasmic reticulum (ER) in a sterol-mediated manner. Post-translationally, phosphorylated. Phosphorylation at Ser-872 reduces the catalytic activity.

The protein resides in the endoplasmic reticulum membrane. The protein localises to the peroxisome membrane. It catalyses the reaction (R)-mevalonate + 2 NADP(+) + CoA = (3S)-3-hydroxy-3-methylglutaryl-CoA + 2 NADPH + 2 H(+). It functions in the pathway metabolic intermediate biosynthesis; (R)-mevalonate biosynthesis; (R)-mevalonate from acetyl-CoA: step 3/3. Regulated by a negative feedback mechanism through sterols and non-sterol metabolites derived from mevalonate. Phosphorylation at Ser-872 down-regulates the catalytic activity. Functionally, catalyzes the conversion of (3S)-hydroxy-3-methylglutaryl-CoA (HMG-CoA) to mevalonic acid, the rate-limiting step in the synthesis of cholesterol and other isoprenoids, thus plays a critical role in cellular cholesterol homeostasis. This Bos taurus (Bovine) protein is 3-hydroxy-3-methylglutaryl-coenzyme A reductase (HMGCR).